The following is an 821-amino-acid chain: Dapper homolog 1 (821 aa).

Positions leucine 88–threonine 136 form a coiled coil. Disordered regions lie at residues serine 288 to histidine 312, glutamine 386 to asparagine 432, asparagine 564 to arginine 615, and glutamate 627 to lysine 655. Residues alanine 388–proline 400 show a composition bias toward low complexity. Over residues glutamine 401–asparagine 432 the composition is skewed to polar residues. Composition is skewed to basic residues over residues aspartate 584–threonine 593, histidine 601–arginine 615, and alanine 639–histidine 649. The short motif at methionine 818 to valine 821 is the PDZ-binding element.

This sequence belongs to the dapper family. Interacts with dvl2.

It is found in the cytoplasm. Functionally, involved in regulation of intracellular signaling pathways during development. Specifically thought to play a role in canonical and/or non-canonical Wnt signaling pathways through interaction with DSH (Dishevelled) family proteins. Binds to dvl2 and may regulate the degradation of ctnnb1/beta-catenin, thereby modulating the transcriptional activation of target genes of the Wnt signaling pathway. Seems to activate the canonical Wnt signaling pathway. This chain is Dapper homolog 1 (dact1), found in Danio rerio (Zebrafish).